Reading from the N-terminus, the 503-residue chain is uncharacterized protein (503 aa).

It belongs to the Mg-chelatase subunits D/I family. ComM subfamily.

This is an uncharacterized protein from Mycobacterium bovis (strain ATCC BAA-935 / AF2122/97).